The following is a 461-amino-acid chain: GTPase Der (461 aa).

2 consecutive EngA-type G domains span residues 9–171 (KTIA…DLNQ) and 200–371 (IQVG…ECFS). GTP-binding positions include 15-22 (GQPNVGKS), 62-66 (DTGGM), 123-126 (NKID), 206-213 (GRVNVGKS), 253-257 (DTAGI), and 317-320 (NKWD). The KH-like domain maps to 372 to 456 (KRIPTSLLNS…PLILNAKDKK (85 aa)).

It belongs to the TRAFAC class TrmE-Era-EngA-EngB-Septin-like GTPase superfamily. EngA (Der) GTPase family. Associates with the 50S ribosomal subunit.

Its function is as follows. GTPase that plays an essential role in the late steps of ribosome biogenesis. The polypeptide is GTPase Der (Helicobacter pylori (strain Shi470)).